A 238-amino-acid polypeptide reads, in one-letter code: 2-C-methyl-D-erythritol 4-phosphate cytidylyltransferase (238 aa).

It belongs to the IspD/TarI cytidylyltransferase family. IspD subfamily.

It carries out the reaction 2-C-methyl-D-erythritol 4-phosphate + CTP + H(+) = 4-CDP-2-C-methyl-D-erythritol + diphosphate. It participates in isoprenoid biosynthesis; isopentenyl diphosphate biosynthesis via DXP pathway; isopentenyl diphosphate from 1-deoxy-D-xylulose 5-phosphate: step 2/6. Its function is as follows. Catalyzes the formation of 4-diphosphocytidyl-2-C-methyl-D-erythritol from CTP and 2-C-methyl-D-erythritol 4-phosphate (MEP). The chain is 2-C-methyl-D-erythritol 4-phosphate cytidylyltransferase from Paraburkholderia phytofirmans (strain DSM 17436 / LMG 22146 / PsJN) (Burkholderia phytofirmans).